The primary structure comprises 273 residues: MSDMHSLLVAAILGVVEGLTEFLPVSSTGHMIIVGHLLGFEGDTAKTFEVVIQLGSILAVVVMFWRRLFGLIGIHFGRPLQHEGESKGRLTLIHILLGMIPAVVLGLLFHDAIKSLFNPINVMYALVVGGLLLIAAECLKPKEPRAPGLDDMTYRQAFMIGCFQCLALWPGFSRSGATISGGMLMGVSRYAASEFSFLLAVPMMMGATALDLYKSWGFLTTGDIPMFAVGFITAFVVALVAIKTFLQLIKRISFIPFAIYRFIVAAAVYVVFF.

Transmembrane regions (helical) follow at residues 6–26, 45–65, 90–110, 116–136, 190–210, 222–242, and 252–272; these read SLLVAAILGVVEGLTEFLPVS, AKTFEVVIQLGSILAVVVMFW, LTLIHILLGMIPAVVLGLLFH, LFNPINVMYALVVGGLLLIAA, YAASEFSFLLAVPMMMGATAL, GDIPMFAVGFITAFVVALVAI, and ISFIPFAIYRFIVAAAVYVVF.

It belongs to the UppP family.

It is found in the cell inner membrane. The catalysed reaction is di-trans,octa-cis-undecaprenyl diphosphate + H2O = di-trans,octa-cis-undecaprenyl phosphate + phosphate + H(+). Catalyzes the dephosphorylation of undecaprenyl diphosphate (UPP). Confers resistance to bacitracin. The chain is Undecaprenyl-diphosphatase from Escherichia fergusonii (strain ATCC 35469 / DSM 13698 / CCUG 18766 / IAM 14443 / JCM 21226 / LMG 7866 / NBRC 102419 / NCTC 12128 / CDC 0568-73).